Reading from the N-terminus, the 572-residue chain is Mitochondrial distribution and morphology protein 34 (572 aa).

The SMP-LTD domain occupies 1 to 195; that stretch reads MAFNFNWSPL…LPAIIHRLSL (195 aa). Disordered regions lie at residues 212–236, 355–426, 487–507, and 552–572; these read TASA…VDAL, GAGR…PDND, HGAS…GSSR, and ACGP…AYGH. The span at 358–370 shows a compositional bias: basic residues; that stretch reads RHSKAHARKRKKR. A compositionally biased stretch (basic and acidic residues) spans 371–381; that stretch reads VVDLRRPKTTD. Residues 387-400 are compositionally biased toward polar residues; the sequence is SDESSFTESTSAPS.

The protein belongs to the MDM34 family. In terms of assembly, component of the ER-mitochondria encounter structure (ERMES) or MDM complex, composed of mmm1, mdm10, mdm12 and mdm34.

The protein resides in the mitochondrion outer membrane. Functionally, component of the ERMES/MDM complex, which serves as a molecular tether to connect the endoplasmic reticulum (ER) and mitochondria. Components of this complex are involved in the control of mitochondrial shape and protein biogenesis, and function in nonvesicular lipid trafficking between the ER and mitochondria. Mdm34 is required for the interaction of the ER-resident membrane protein mmm1 and the outer mitochondrial membrane-resident beta-barrel protein mdm10. In Aspergillus fumigatus (strain ATCC MYA-4609 / CBS 101355 / FGSC A1100 / Af293) (Neosartorya fumigata), this protein is Mitochondrial distribution and morphology protein 34.